Reading from the N-terminus, the 317-residue chain is Olfactory receptor 6Q1 (317 aa).

Residues 1 to 27 lie on the Extracellular side of the membrane; sequence MQPYTKNWTQVTEFVMMGFAGIHEAHL. A glycan (N-linked (GlcNAc...) asparagine) is linked at asparagine 7. Residues 28–48 traverse the membrane as a helical segment; the sequence is LFFILFLTMYLFTLVENLAII. Over 49-56 the chain is Cytoplasmic; it reads LVVGLDHR. A helical transmembrane segment spans residues 57 to 77; that stretch reads LRRPMYFFLTHLSCLEIWYTS. The Extracellular portion of the chain corresponds to 78 to 103; that stretch reads VTVPKMLAGFIGVDGGKNISYADCLS. Residue asparagine 95 is glycosylated (N-linked (GlcNAc...) asparagine). Cysteine 101 and cysteine 193 are disulfide-bonded. Residues 104–124 traverse the membrane as a helical segment; the sequence is QLFIFTFLGATECFLLAAMAY. The Cytoplasmic segment spans residues 125 to 143; the sequence is DRYVAICMPLHYGAFVSWG. Residues 144-164 form a helical membrane-spanning segment; the sequence is TCIRLAAACWLVGFLTPILPI. Topologically, residues 165-201 are extracellular; the sequence is YLLSQLTFYGPNVIDHFSCDASPLLALSCSDVTWKET. The chain crosses the membrane as a helical span at residues 202–221; the sequence is VDFLVSLAVLLASSMVIAVS. The Cytoplasmic segment spans residues 222 to 241; sequence YGNIVWTLLHIRSAAERWKA. Residues 242 to 262 form a helical membrane-spanning segment; it reads FSTCAAHLTVVSLFYGTLFFM. Topologically, residues 263–275 are extracellular; that stretch reads YVQTKVTSSINFN. A helical membrane pass occupies residues 276–296; that stretch reads KVVSVFYSVVTPMLNPLIYSL. At 297-317 the chain is on the cytoplasmic side; sequence RNKEVKGALGRVFSLNFWKGQ.

The protein belongs to the G-protein coupled receptor 1 family.

It is found in the cell membrane. Functionally, odorant receptor. This is Olfactory receptor 6Q1 (OR6Q1) from Homo sapiens (Human).